Here is a 418-residue protein sequence, read N- to C-terminus: NADH-quinone oxidoreductase subunit D (418 aa).

It belongs to the complex I 49 kDa subunit family. In terms of assembly, NDH-1 is composed of 14 different subunits. Subunits NuoB, C, D, E, F, and G constitute the peripheral sector of the complex.

The protein localises to the cell inner membrane. It carries out the reaction a quinone + NADH + 5 H(+)(in) = a quinol + NAD(+) + 4 H(+)(out). Functionally, NDH-1 shuttles electrons from NADH, via FMN and iron-sulfur (Fe-S) centers, to quinones in the respiratory chain. The immediate electron acceptor for the enzyme in this species is believed to be ubiquinone. Couples the redox reaction to proton translocation (for every two electrons transferred, four hydrogen ions are translocated across the cytoplasmic membrane), and thus conserves the redox energy in a proton gradient. This is NADH-quinone oxidoreductase subunit D from Bordetella pertussis (strain Tohama I / ATCC BAA-589 / NCTC 13251).